The following is a 288-amino-acid chain: Proteasome assembly chaperone 1 (288 aa).

Alanine 2 is modified (N-acetylalanine). Residues 12-38 are disordered; sequence TPCRAGTEEEEEEEDGNRETPEDREVR. Residue threonine 18 is modified to Phosphothreonine. Basic and acidic residues predominate over residues 28 to 38; that stretch reads NRETPEDREVR. Threonine 54 carries the post-translational modification Phosphothreonine. At serine 180 the chain carries Phosphoserine. Lysine 264 is subject to N6-acetyllysine.

Belongs to the PSMG1 family. Forms a heterodimer with PSMG2. The PSMG1-PSMG2 heterodimer interacts directly with the PSMA5 and PSMA7 proteasome alpha subunits. Degraded by the proteasome upon completion of 20S proteasome maturation.

Its subcellular location is the cytoplasm. It is found in the endoplasmic reticulum. Its function is as follows. Chaperone protein which promotes assembly of the 20S proteasome as part of a heterodimer with PSMG2. The PSMG1-PSMG2 heterodimer binds to the PSMA5 and PSMA7 proteasome subunits, promotes assembly of the proteasome alpha subunits into the heteroheptameric alpha ring and prevents alpha ring dimerization. The polypeptide is Proteasome assembly chaperone 1 (Bos taurus (Bovine)).